A 360-amino-acid chain; its full sequence is Protein phosphatase 1L (360 aa).

Residues 1 to 25 (MIEDTMTLLSLLGRIMRYFLLRPET) are Extracellular-facing. Residues 26–42 (LFLLCISLALWSYFFHT) form a helical membrane-spanning segment. The Cytoplasmic segment spans residues 43-360 (DEVKTIVKSS…FRNSSKTEEQ (318 aa)). The PPM-type phosphatase domain maps to 92–351 (NVAVYSIQGR…DNITVMVVKF (260 aa)). The Mn(2+) site is built by D128, G129, D302, and D342.

It belongs to the PP2C family. In terms of assembly, interacts with MAP3K7/TAK1 and MAP3K5. Mg(2+) is required as a cofactor. It depends on Mn(2+) as a cofactor.

Its subcellular location is the membrane. The catalysed reaction is O-phospho-L-seryl-[protein] + H2O = L-seryl-[protein] + phosphate. It carries out the reaction O-phospho-L-threonyl-[protein] + H2O = L-threonyl-[protein] + phosphate. Its function is as follows. Acts as a suppressor of the SAPK signaling pathways by associating with and dephosphorylating MAP3K7/TAK1 and MAP3K5, and by attenuating the association between MAP3K7/TAK1 and MAP2K4 or MAP2K6. This chain is Protein phosphatase 1L (PPM1L), found in Bos taurus (Bovine).